The chain runs to 193 residues: Imidazoleglycerol-phosphate dehydratase (193 aa).

It belongs to the imidazoleglycerol-phosphate dehydratase family.

It is found in the cytoplasm. It catalyses the reaction D-erythro-1-(imidazol-4-yl)glycerol 3-phosphate = 3-(imidazol-4-yl)-2-oxopropyl phosphate + H2O. The protein operates within amino-acid biosynthesis; L-histidine biosynthesis; L-histidine from 5-phospho-alpha-D-ribose 1-diphosphate: step 6/9. The polypeptide is Imidazoleglycerol-phosphate dehydratase (Saccharolobus islandicus (strain Y.N.15.51 / Yellowstone #2) (Sulfolobus islandicus)).